Reading from the N-terminus, the 198-residue chain is Recombination protein RecR (198 aa).

The C4-type zinc-finger motif lies at 57–72 (CSVCGNLTDEDPCSIC). In terms of domain architecture, Toprim spans 80 to 175 (SMILVVEDSK…KVTRLARGLA (96 aa)).

It belongs to the RecR family.

Its function is as follows. May play a role in DNA repair. It seems to be involved in an RecBC-independent recombinational process of DNA repair. It may act with RecF and RecO. In Streptococcus uberis (strain ATCC BAA-854 / 0140J), this protein is Recombination protein RecR.